The sequence spans 118 residues: UPF0449 protein C19orf25 (118 aa).

Residue tyrosine 63 is modified to Phosphotyrosine. Residues 81 to 109 adopt a coiled-coil conformation; it reads NVLRQRCELLQRAGEDLEREVAQMKQAAL.

The protein belongs to the UPF0449 family.

This chain is UPF0449 protein C19orf25 (C19orf25), found in Homo sapiens (Human).